The primary structure comprises 388 residues: GTPase Obg (388 aa).

The Obg domain maps to 1 to 159; the sequence is MKFIDEASIR…RSLRLELLLL (159 aa). The 174-residue stretch at 160–333 folds into the OBG-type G domain; the sequence is ADVGLLGMPN…LSLKLLDYIA (174 aa). Residues 166 to 173, 191 to 195, 213 to 216, 283 to 286, and 314 to 316 contribute to the GTP site; these read GMPNAGKS, FTTLV, DIPG, NKTD, and SAF. Ser173 and Thr193 together coordinate Mg(2+).

Belongs to the TRAFAC class OBG-HflX-like GTPase superfamily. OBG GTPase family. Monomer. It depends on Mg(2+) as a cofactor.

Its subcellular location is the cytoplasm. Its function is as follows. An essential GTPase which binds GTP, GDP and possibly (p)ppGpp with moderate affinity, with high nucleotide exchange rates and a fairly low GTP hydrolysis rate. Plays a role in control of the cell cycle, stress response, ribosome biogenesis and in those bacteria that undergo differentiation, in morphogenesis control. The polypeptide is GTPase Obg (Shewanella denitrificans (strain OS217 / ATCC BAA-1090 / DSM 15013)).